We begin with the raw amino-acid sequence, 205 residues long: Ribosomal RNA small subunit methyltransferase G (205 aa).

S-adenosyl-L-methionine contacts are provided by residues G73, L78, 124–125, and R138; that span reads VE.

Belongs to the methyltransferase superfamily. RNA methyltransferase RsmG family.

Its subcellular location is the cytoplasm. The enzyme catalyses guanosine(527) in 16S rRNA + S-adenosyl-L-methionine = N(7)-methylguanosine(527) in 16S rRNA + S-adenosyl-L-homocysteine. Specifically methylates the N7 position of guanine in position 527 of 16S rRNA. This chain is Ribosomal RNA small subunit methyltransferase G, found in Actinobacillus pleuropneumoniae serotype 5b (strain L20).